Reading from the N-terminus, the 100-residue chain is uncharacterized protein (100 aa).

The helical transmembrane segment at 62-82 (IPIVIIVSIFILLIIGSISLY) threads the bilayer.

Its subcellular location is the membrane. This is an uncharacterized protein from Dictyostelium discoideum (Social amoeba).